Reading from the N-terminus, the 160-residue chain is uncharacterized protein (160 aa).

The Cupin type-2 domain occupies 37–110; that stretch reads LMSLKPKEDI…TDYLKLYTIY (74 aa).

It localises to the virion. This is an uncharacterized protein from Acanthamoeba polyphaga mimivirus (APMV).